Reading from the N-terminus, the 197-residue chain is UPF0319 protein VP0761 (197 aa).

The first 20 residues, methionine 1–alanine 20, serve as a signal peptide directing secretion.

Belongs to the UPF0319 family.

The protein is UPF0319 protein VP0761 of Vibrio parahaemolyticus serotype O3:K6 (strain RIMD 2210633).